We begin with the raw amino-acid sequence, 92 residues long: Small ribosomal subunit protein uS19 (92 aa).

Belongs to the universal ribosomal protein uS19 family. In terms of assembly, part of the 30S ribosomal subunit.

Functionally, protein S19 forms a complex with S13 that binds strongly to the 16S ribosomal RNA. This Bacillus subtilis (strain 168) protein is Small ribosomal subunit protein uS19 (rpsS).